The sequence spans 364 residues: Appendage-associated protein (364 aa).

2 coiled-coil regions span residues I142 to R196 and R288 to K313.

The protein localises to the secreted. Functionally, associates with actin filament appendages that are formed in the inclusion appendages of the parasitophorous vacuole during infection of the host erythrocyte. The chain is Appendage-associated protein from Anaplasma marginale (strain Illinois).